We begin with the raw amino-acid sequence, 151 residues long: UPF0208 membrane protein Ent638_2839 (151 aa).

The next 2 helical transmembrane spans lie at 46 to 65 (YAIR…QIAL) and 69 to 91 (LGPA…WWLG).

It belongs to the UPF0208 family.

It is found in the cell inner membrane. The sequence is that of UPF0208 membrane protein Ent638_2839 from Enterobacter sp. (strain 638).